A 176-amino-acid chain; its full sequence is Japanin (176 aa).

The first 24 residues, 1–24 (MKVLRCLVCSFYIIVSLITTMTIG), serve as a signal peptide directing secretion. Residue glutamate 47 participates in cholesterol binding. Intrachain disulfides connect cysteine 52-cysteine 174 and cysteine 138-cysteine 162. N-linked (GlcNAc...) asparagine glycosylation is found at asparagine 59 and asparagine 155.

The protein belongs to the calycin superfamily. Lipocalin family. In terms of assembly, homodimer; non-disulfide-linked. Each monomer accommodates one molecule of cholesterol in a pocket. As to expression, expressed in salivary glands.

Its subcellular location is the secreted. In terms of biological role, salivary tick protein that modulates host immune response. This protein blocks dendritic cell (DC) differentiation from monocytes. In addition, it inhibits up-regulation of costimulatory molecules and pro-inflammatory cytokines in response to stimuli and promotes up-regulation of co-inhibitory molecules and the anti-inflammatory cytokine interleukin-10. It has a pocket to accomodate cholesterol, which may have immune-modulatory roles, either directly or through interactions with the host gut microbiota. This chain is Japanin, found in Rhipicephalus appendiculatus (Brown ear tick).